Reading from the N-terminus, the 348-residue chain is D-alanine--D-alanine ligase (348 aa).

The region spanning 136–344 (KSVFKSYNLP…LEKLVASLIE (209 aa)) is the ATP-grasp domain. 171 to 226 (NKIINYPCFIKPANLGSSVGITKAYSKEEFITGIEFAAKYDERIIVEKSIEGRELE) serves as a coordination point for ATP. Mg(2+) is bound by residues Asp297, Glu311, and Asn313.

It belongs to the D-alanine--D-alanine ligase family. It depends on Mg(2+) as a cofactor. Mn(2+) is required as a cofactor.

It localises to the cytoplasm. The enzyme catalyses 2 D-alanine + ATP = D-alanyl-D-alanine + ADP + phosphate + H(+). Its pathway is cell wall biogenesis; peptidoglycan biosynthesis. Cell wall formation. This Prochlorococcus marinus (strain NATL1A) protein is D-alanine--D-alanine ligase.